A 220-amino-acid polypeptide reads, in one-letter code: Translation initiation factor 6 (220 aa).

The protein belongs to the eIF-6 family.

Functionally, binds to the 50S ribosomal subunit and prevents its association with the 30S ribosomal subunit to form the 70S initiation complex. This is Translation initiation factor 6 from Pyrobaculum arsenaticum (strain DSM 13514 / JCM 11321 / PZ6).